The following is a 68-amino-acid chain: MAAMKTADIRAMTPDQMDDAITSLKKERFNLRFQRATGQLENTSRMREARRDIARIKTIAAQKRDAKK.

This sequence belongs to the universal ribosomal protein uL29 family.

This is Large ribosomal subunit protein uL29 from Nitrobacter winogradskyi (strain ATCC 25391 / DSM 10237 / CIP 104748 / NCIMB 11846 / Nb-255).